The following is a 565-amino-acid chain: Adenine deaminase (565 aa).

The protein belongs to the metallo-dependent hydrolases superfamily. Adenine deaminase family. It depends on Mn(2+) as a cofactor.

The enzyme catalyses adenine + H2O + H(+) = hypoxanthine + NH4(+). This is Adenine deaminase from Cereibacter sphaeroides (strain KD131 / KCTC 12085) (Rhodobacter sphaeroides).